The chain runs to 387 residues: MSVIKMTDLDLAGKRVLIRADLNVPVKEGKVTSDARIRASLPTIELALKQGAKVMVTSHLGRPTEGEYNEEFSLLPVVNYLKDKLNSPVRLAKDYLDGVEVAEGELVVLENVRFNKGEKKDDETLAKKYASLCDVFVMDAFGTAHRAQASTHGVAKFADVACAGPLLAEELDALGKALKEPARPMVAIVGGSKVSTKLTVLDSLSKIADQLIVGGGIANTFVAAQGHNVGKSLYEADLVDEAKRLLGTCDIPVPTDVRVATEFSETAPATLKSVTEIKDEEQILDMGDVSAEKLAEILKNAKTILWNGPVGVFEFPNFRKGTEIVARAIAESDAFSIAGGGDTLAAIDMFGIADKISYISTGGGAFLEFVEGKVLPAVAMLEERAKK.

Residues 21-23, R36, 59-62, R113, and R146 contribute to the substrate site; these read DLN and HLGR. ATP contacts are provided by residues K197, E314, and 340-343; that span reads GGDT.

Belongs to the phosphoglycerate kinase family. In terms of assembly, monomer.

The protein localises to the cytoplasm. The enzyme catalyses (2R)-3-phosphoglycerate + ATP = (2R)-3-phospho-glyceroyl phosphate + ADP. It functions in the pathway carbohydrate degradation; glycolysis; pyruvate from D-glyceraldehyde 3-phosphate: step 2/5. In Cronobacter sakazakii (strain ATCC BAA-894) (Enterobacter sakazakii), this protein is Phosphoglycerate kinase.